Consider the following 654-residue polypeptide: DNA-directed RNA polymerase III subunit RPC3 (654 aa).

A Phosphothreonine modification is found at Thr27. Disordered stretches follow at residues 381 to 401 (LSRKPSDNKKRSGSNAAASLP) and 422 to 448 (KSLQESGDTQEEDEEEEDLDADTEDPH). Phosphoserine occurs at positions 392 and 394. Acidic residues predominate over residues 429–444 (DTQEEDEEEEDLDADT). A leucine-zipper region spans residues 581-602 (LEWNMANLLFKKEKLKQENSTL).

This sequence belongs to the eukaryotic RPC3/POLR3C RNA polymerase subunit family. As to quaternary structure, component of the RNA polymerase III (Pol III) complex consisting of 17 subunits.

The protein localises to the cytoplasm. Its subcellular location is the nucleus. Functionally, DNA-dependent RNA polymerase catalyzes the transcription of DNA into RNA using the four ribonucleoside triphosphates as substrates. Specific core component of RNA polymerase III which synthesizes small RNAs, such as 5S rRNA and tRNAs. The protein is DNA-directed RNA polymerase III subunit RPC3 (RPC82) of Saccharomyces cerevisiae (strain ATCC 204508 / S288c) (Baker's yeast).